The sequence spans 160 residues: Keratin-associated protein 13-4 (160 aa).

4 tandem repeats follow at residues 41–50 (CQLGSSLYRD), 51–60 (CQKTCWEPAS), 61–70 (CQKSCYHPRT), and 77–86 (CQTTCSGSLG). Positions 41 to 86 (CQLGSSLYRDCQKTCWEPASCQKSCYHPRTSMLCCPCQTTCSGSLG) are 4 X 10 AA approximate repeats.

This sequence belongs to the PMG family. In terms of assembly, interacts with hair keratins.

Functionally, in the hair cortex, hair keratin intermediate filaments are embedded in an interfilamentous matrix, consisting of hair keratin-associated proteins (KRTAP), which are essential for the formation of a rigid and resistant hair shaft through their extensive disulfide bond cross-linking with abundant cysteine residues of hair keratins. The matrix proteins include the high-sulfur and high-glycine-tyrosine keratins. This is Keratin-associated protein 13-4 (KRTAP13-4) from Hylobates agilis (Agile gibbon).